We begin with the raw amino-acid sequence, 180 residues long: Major urinary protein 1 (180 aa).

The signal sequence occupies residues 1–18 (MKMLLLLCLGLTLVCVHA). Residues C82 and C175 are joined by a disulfide bond.

Belongs to the calycin superfamily. Lipocalin family. In terms of tissue distribution, abundant in the urine of adult male mice but absent from that of females.

The protein localises to the secreted. Functionally, binds pheromones that are released from drying urine of males. These pheromones affect the sexual behavior of females. The sequence is that of Major urinary protein 1 (Mup1) from Mus musculus (Mouse).